Reading from the N-terminus, the 301-residue chain is Possible hemolysin C (301 aa).

CBS domains follow at residues 79-141 (MVPR…NFRL) and 144-201 (LIRK…IDDE).

The protein belongs to the UPF0053 family. Hemolysin C subfamily.

This is Possible hemolysin C (tlyC) from Rickettsia bellii (strain RML369-C).